The primary structure comprises 268 residues: Indole-3-glycerol phosphate synthase (268 aa).

The protein belongs to the TrpC family.

It catalyses the reaction 1-(2-carboxyphenylamino)-1-deoxy-D-ribulose 5-phosphate + H(+) = (1S,2R)-1-C-(indol-3-yl)glycerol 3-phosphate + CO2 + H2O. Its pathway is amino-acid biosynthesis; L-tryptophan biosynthesis; L-tryptophan from chorismate: step 4/5. This is Indole-3-glycerol phosphate synthase from Magnetococcus marinus (strain ATCC BAA-1437 / JCM 17883 / MC-1).